Here is a 455-residue protein sequence, read N- to C-terminus: Bifunctional protein GlmU (455 aa).

Residues 1–232 (MASTTGALIL…DPNLLGVNNP (232 aa)) are pyrophosphorylase. Residues 10–13 (LAAG), lysine 24, glutamine 75, and 80–81 (GT) contribute to the UDP-N-acetyl-alpha-D-glucosamine site. Aspartate 106 is a binding site for Mg(2+). Glycine 141, glutamate 155, asparagine 172, and asparagine 230 together coordinate UDP-N-acetyl-alpha-D-glucosamine. Asparagine 230 contributes to the Mg(2+) binding site. A linker region spans residues 233-253 (AELIRSEALLRTRLVIGHIEG). Residues 254-455 (GVLIHAPETV…QTNLPRKPKA (202 aa)) form an N-acetyltransferase region. UDP-N-acetyl-alpha-D-glucosamine contacts are provided by arginine 336 and lysine 354. Catalysis depends on histidine 366, which acts as the Proton acceptor. UDP-N-acetyl-alpha-D-glucosamine contacts are provided by tyrosine 369 and asparagine 380. Acetyl-CoA-binding positions include alanine 383, 389-390 (NY), serine 408, alanine 426, and arginine 443.

It in the N-terminal section; belongs to the N-acetylglucosamine-1-phosphate uridyltransferase family. This sequence in the C-terminal section; belongs to the transferase hexapeptide repeat family. As to quaternary structure, homotrimer. Requires Mg(2+) as cofactor.

The protein resides in the cytoplasm. It catalyses the reaction alpha-D-glucosamine 1-phosphate + acetyl-CoA = N-acetyl-alpha-D-glucosamine 1-phosphate + CoA + H(+). The catalysed reaction is N-acetyl-alpha-D-glucosamine 1-phosphate + UTP + H(+) = UDP-N-acetyl-alpha-D-glucosamine + diphosphate. It functions in the pathway nucleotide-sugar biosynthesis; UDP-N-acetyl-alpha-D-glucosamine biosynthesis; N-acetyl-alpha-D-glucosamine 1-phosphate from alpha-D-glucosamine 6-phosphate (route II): step 2/2. The protein operates within nucleotide-sugar biosynthesis; UDP-N-acetyl-alpha-D-glucosamine biosynthesis; UDP-N-acetyl-alpha-D-glucosamine from N-acetyl-alpha-D-glucosamine 1-phosphate: step 1/1. Its pathway is bacterial outer membrane biogenesis; LPS lipid A biosynthesis. Catalyzes the last two sequential reactions in the de novo biosynthetic pathway for UDP-N-acetylglucosamine (UDP-GlcNAc). The C-terminal domain catalyzes the transfer of acetyl group from acetyl coenzyme A to glucosamine-1-phosphate (GlcN-1-P) to produce N-acetylglucosamine-1-phosphate (GlcNAc-1-P), which is converted into UDP-GlcNAc by the transfer of uridine 5-monophosphate (from uridine 5-triphosphate), a reaction catalyzed by the N-terminal domain. The sequence is that of Bifunctional protein GlmU from Nitratidesulfovibrio vulgaris (strain ATCC 29579 / DSM 644 / CCUG 34227 / NCIMB 8303 / VKM B-1760 / Hildenborough) (Desulfovibrio vulgaris).